We begin with the raw amino-acid sequence, 325 residues long: MLDWLKVNLQYVTPKHLLSRLVGKLAEAEMGSVTTFFIKLFIKQYNVDMTEALHEKPEHYRSFNKFFTRTLKPEARTIDESDDVLIHAVDGTVSQFGDIRSDSIFQAKGHDFSLTTLLGGKPDVAAPFKNGKFATVYLAPRDYHRIHMPIEGTLTDMLYVPGELFSVNPLTAQNIPGLFARNERVVALFDTPVGKMAMVLVGATIVASIETVWAGTVTPPTGKTVQHWSYETDSEAAVKLEKGAELGRFKLGSTIVVCFEKDMIDFEDIAPGMVTRLGEPMASKMSSQKAITPEQTTETPVQASNEFDDNAGETKKDTPSEGADS.

Active-site charge relay system; for autoendoproteolytic cleavage activity residues include Asp-90, His-147, and Ser-253. Catalysis depends on Ser-253, which acts as the Schiff-base intermediate with substrate; via pyruvic acid; for decarboxylase activity. Ser-253 bears the Pyruvic acid (Ser); by autocatalysis mark. The interval 281 to 325 is disordered; it reads MASKMSSQKAITPEQTTETPVQASNEFDDNAGETKKDTPSEGADS. Polar residues predominate over residues 284–305; the sequence is KMSSQKAITPEQTTETPVQASN.

It belongs to the phosphatidylserine decarboxylase family. PSD-B subfamily. Prokaryotic type I sub-subfamily. Heterodimer of a large membrane-associated beta subunit and a small pyruvoyl-containing alpha subunit. It depends on pyruvate as a cofactor. Post-translationally, is synthesized initially as an inactive proenzyme. Formation of the active enzyme involves a self-maturation process in which the active site pyruvoyl group is generated from an internal serine residue via an autocatalytic post-translational modification. Two non-identical subunits are generated from the proenzyme in this reaction, and the pyruvate is formed at the N-terminus of the alpha chain, which is derived from the carboxyl end of the proenzyme. The autoendoproteolytic cleavage occurs by a canonical serine protease mechanism, in which the side chain hydroxyl group of the serine supplies its oxygen atom to form the C-terminus of the beta chain, while the remainder of the serine residue undergoes an oxidative deamination to produce ammonia and the pyruvoyl prosthetic group on the alpha chain. During this reaction, the Ser that is part of the protease active site of the proenzyme becomes the pyruvoyl prosthetic group, which constitutes an essential element of the active site of the mature decarboxylase.

The protein resides in the cell membrane. The enzyme catalyses a 1,2-diacyl-sn-glycero-3-phospho-L-serine + H(+) = a 1,2-diacyl-sn-glycero-3-phosphoethanolamine + CO2. It participates in phospholipid metabolism; phosphatidylethanolamine biosynthesis; phosphatidylethanolamine from CDP-diacylglycerol: step 2/2. Functionally, catalyzes the formation of phosphatidylethanolamine (PtdEtn) from phosphatidylserine (PtdSer). In Alteromonas mediterranea (strain DSM 17117 / CIP 110805 / LMG 28347 / Deep ecotype), this protein is Phosphatidylserine decarboxylase proenzyme.